The following is a 316-amino-acid chain: GTPase Era (316 aa).

The region spanning 9-190 (RAGFAAIIGA…TAKLVSMMPE (182 aa)) is the Era-type G domain. Positions 17-24 (GAPNAGKS) are G1. 17 to 24 (GAPNAGKS) is a GTP binding site. The segment at 43–47 (QTTRF) is G2. The G3 stretch occupies residues 64–67 (DTPG). Residues 64-68 (DTPGI) and 140-143 (NKID) contribute to the GTP site. The tract at residues 140 to 143 (NKID) is G4. Residues 169–171 (ISA) are G5. The KH type-2 domain occupies 221–298 (VHEELPYAAT…HLFLHVKVKE (78 aa)).

Belongs to the TRAFAC class TrmE-Era-EngA-EngB-Septin-like GTPase superfamily. Era GTPase family. Monomer.

The protein resides in the cytoplasm. It is found in the cell inner membrane. An essential GTPase that binds both GDP and GTP, with rapid nucleotide exchange. Plays a role in 16S rRNA processing and 30S ribosomal subunit biogenesis and possibly also in cell cycle regulation and energy metabolism. The polypeptide is GTPase Era (Caulobacter vibrioides (strain ATCC 19089 / CIP 103742 / CB 15) (Caulobacter crescentus)).